The sequence spans 337 residues: 2-oxoglutarate-dependent dioxygenase frbA (337 aa).

A Fe2OG dioxygenase domain is found at 175–290 (CSAELRLNHY…RHSLAYFGKP (116 aa)). Fe cation contacts are provided by H202, D204, and H262. R281 contributes to the 2-oxoglutarate binding site.

The protein belongs to the iron/ascorbate-dependent oxidoreductase family. Requires Fe(2+) as cofactor.

It functions in the pathway antifungal biosynthesis. Functionally, 2-oxoglutarate-dependent dioxygenase; part of the gene cluster that mediates the biosynthesis of the antifungal antibiotic FR901469, an inhibitor of beta-1,3-glucansynthase, exerting antifungal activity against the pathogenes Candida albicans and Aspergillus fumigatus. FR901469 is a cyclic depsipeptide containing 12 amino acid residues and a fatty acid chain. The NRPS frbI contains 12 modules responsible for the formation of the depsipeptide backbone which is denoted as Acyl-Thr-Ala-Tyr-Val-4OHPro-Thr-Thr-3OHPro-threo3OHGln-Gly-Thr-Orn-OH (C71H116N14O23). The PKS frbB is probably involved in the production of the hydrocarbon chain, and the acyl-CoA ligase frbC might be involved in the transport of the chain to the peptide ptoduct of frbI. Because FR901469 contains 3 hydroxylated amino acid residues, the 3 oxygenases frbA, frbH, and frbJ might be participating in amino acid hydroxylation. As no thioesterase domains were detected in frbI or frbB, the thioesterases frbD and frbE may instead release and cyclize the products of the NRPS and PKS, respectively. This chain is 2-oxoglutarate-dependent dioxygenase frbA, found in Dothideomycetidae sp. (strain 11243) (Fungal sp. (strain No.11243)).